We begin with the raw amino-acid sequence, 446 residues long: Exodeoxyribonuclease 7 large subunit (446 aa).

The protein belongs to the XseA family. As to quaternary structure, heterooligomer composed of large and small subunits.

The protein localises to the cytoplasm. It catalyses the reaction Exonucleolytic cleavage in either 5'- to 3'- or 3'- to 5'-direction to yield nucleoside 5'-phosphates.. In terms of biological role, bidirectionally degrades single-stranded DNA into large acid-insoluble oligonucleotides, which are then degraded further into small acid-soluble oligonucleotides. The protein is Exodeoxyribonuclease 7 large subunit of Streptococcus pneumoniae (strain Taiwan19F-14).